A 434-amino-acid chain; its full sequence is Putative polysaccharide biosynthesis protein with aminopeptidase-like domain (434 aa).

2 aminopeptidase-like regions span residues 1–55 (MEEI…IHEV) and 57–355 (SGTK…IENN). The insert stretch occupies residues 56–164 (KSGTKVFDWT…VVIDSSLEDG (109 aa)). Zn(2+) contacts are provided by His189, Asp195, and His324. Residues 356 to 434 (RTYLNLNPKC…LYRVELLKLV (79 aa)) are permutated winged helix-turn-helix.

Belongs to the UPF0770 family. As to quaternary structure, homotrimer. Requires Zn(2+) as cofactor.

Its function is as follows. The genomic context suggests a role in the biosynthesis of modified polysaccharides; this association with genes involved in carbohydrate metabolism is observed in several phylogenetically distinct taxa. Is not expected to have peptidase activity despite low similarity to aminopeptidases. This Clostridium acetobutylicum (strain ATCC 824 / DSM 792 / JCM 1419 / IAM 19013 / LMG 5710 / NBRC 13948 / NRRL B-527 / VKM B-1787 / 2291 / W) protein is Putative polysaccharide biosynthesis protein with aminopeptidase-like domain.